We begin with the raw amino-acid sequence, 536 residues long: Membrane protein insertase YidC (536 aa).

5 helical membrane-spanning segments follow: residues 7–27, 332–352, 411–431, 449–469, and 488–508; these read LLVMGLLLVSFLIFTQWQQDF, FWLLIFIHSIIGNWGLAIMGV, MGGCLPLILQMPIFIALYWTF, LSAQDPYYIFPVLMGLSMFLL, and FMPVIFTVFFLWFPSGLVLYW.

Belongs to the OXA1/ALB3/YidC family. Type 1 subfamily. As to quaternary structure, interacts with the Sec translocase complex via SecD. Specifically interacts with transmembrane segments of nascent integral membrane proteins during membrane integration.

It localises to the cell inner membrane. Functionally, required for the insertion and/or proper folding and/or complex formation of integral membrane proteins into the membrane. Involved in integration of membrane proteins that insert both dependently and independently of the Sec translocase complex, as well as at least some lipoproteins. Aids folding of multispanning membrane proteins. The chain is Membrane protein insertase YidC from Haemophilus ducreyi (strain 35000HP / ATCC 700724).